We begin with the raw amino-acid sequence, 1443 residues long: DNA polymerase III PolC-type (1443 aa).

The region spanning 408–567 is the Exonuclease domain; that stretch reads FVIFDIETTG…YDTQALKKVF (160 aa).

This sequence belongs to the DNA polymerase type-C family. PolC subfamily.

The protein localises to the cytoplasm. The enzyme catalyses DNA(n) + a 2'-deoxyribonucleoside 5'-triphosphate = DNA(n+1) + diphosphate. Functionally, required for replicative DNA synthesis. This DNA polymerase also exhibits 3' to 5' exonuclease activity. The chain is DNA polymerase III PolC-type from Mycoplasma pneumoniae (strain ATCC 29342 / M129 / Subtype 1) (Mycoplasmoides pneumoniae).